The sequence spans 297 residues: Translocase of chloroplast 33, chloroplastic (297 aa).

One can recognise an AIG1-type G domain in the interval 34-258 (MNSMTVLVLG…HVDKKMVDGS (225 aa)). Residues 37-53 (MTVLVLGKGGVGKSSTV) traverse the membrane as a helical segment. GTP-binding positions include 46–51 (GVGKSS) and 65–70 (SPFQAE). S50 and Q68 together coordinate Mg(2+). Homodimerization regions lie at residues 65 to 68 (SPFQ) and 125 to 130 (RLDVYR). Residue H160 participates in GTP binding. Residue S181 is modified to Phosphoserine. 208–209 (EN) provides a ligand contact to GTP.

This sequence belongs to the TRAFAC class TrmE-Era-EngA-EngB-Septin-like GTPase superfamily. AIG1/Toc34/Toc159-like paraseptin GTPase family. TOC34 subfamily. Homodimer, heterodimer with TOC34 and TOC159, and monomer. The homodimerization and the dimerization with TOC159 require the binding of GTP on Arg-130, and a hypothetical coGAP factor. The dimeric form has a higher GTPase activity than the monomeric form. Part of the TOC core complex that includes 1 protein for the specific recognition of transit peptides surrounded by a ring composed of four proteins forming translocation channels, and four to five GTP-binding proteins providing energy. This core complex can interact with components of the TIC complex to form a larger import complex. Chloroplastic protein precursor such as prSS (precursor of the RuBisCO small subunit) interacts with these complexes. The TOC complex contains a specific subset of polar lipids such as digalactosyldiacylglyceride (DGDG), phosphatidylcholine (PC) and phosphatidylglycerol (PG). Interacts at least with TOC75-3. Forms large complexes including TOC33, pPORA and OEP161 during pPORA import into plastids at the plastid envelope membrane. Interacts with SP1. Mg(2+) serves as cofactor. Phosphorylated by a kinase present in the outer envelope of chloroplast. When Ser-181 is phosphorylated, the binding to preprotein, GTP and GDP is inhibited, and thus, GTPase activity is repressed. In terms of tissue distribution, mostly expressed in seedlings and flowers, and, to a lower extent, in roots, stems, and leaves.

The protein localises to the plastid. Its subcellular location is the chloroplast outer membrane. Functionally, GTPase involved in protein precursor import into chloroplasts. Seems to recognize chloroplast-destined precursor proteins and regulate their presentation to the translocation channel through GTP hydrolysis. Binds GTP, GDP, XTP, but not ATP. Probably specialized in the import of nuclear encoded photosynthetic preproteins from the cytoplasm to the chloroplast, especially during early development stages. The sequence is that of Translocase of chloroplast 33, chloroplastic (TOC33) from Arabidopsis thaliana (Mouse-ear cress).